A 144-amino-acid polypeptide reads, in one-letter code: Putative pre-16S rRNA nuclease (144 aa).

Belongs to the YqgF nuclease family.

Its subcellular location is the cytoplasm. Could be a nuclease involved in processing of the 5'-end of pre-16S rRNA. The polypeptide is Putative pre-16S rRNA nuclease (Pseudomonas paraeruginosa (strain DSM 24068 / PA7) (Pseudomonas aeruginosa (strain PA7))).